Reading from the N-terminus, the 297-residue chain is HTH-type transcriptional regulator AceR (297 aa).

One can recognise an HTH lysR-type domain in the interval 1–60 (MNINQEQLLMFQAVMETGSFSAAARKLGKVPSAVSMSIANLEIDLNLTLFERKGREPTPT). Positions 20-39 (FSAAARKLGKVPSAVSMSIA) form a DNA-binding region, H-T-H motif.

The protein belongs to the LysR transcriptional regulatory family. As to quaternary structure, homodimer and homotetramer. Binding of chlorhexidine at the inducer-binding domain causes a quaternary structural change that favors interactions between dimers to form tetramers.

The protein localises to the cytoplasm. Functionally, regulates the expression of the AceI transporter. Binds DNA and chlorhexidine. Binds to regulatory sites within the intergenic region between the aceI and aceR genes, and affects the interaction between RNA polymerase (RNAP) and promoter DNA both in the presence and in the absence of chlorhexidine. In the absence of chlorhexidine, prevents transcription of the aceI gene by disrupting interactions between the promoter DNA and RNAP. In the presence of chlorhexidine, activates expression of aceI. When AceR interacts with chlorhexidine, it undergoes a conformational change and the tetrameric form either releases the DNA or shifts the position of the DNA-binding region to allow RNAP to bind onto the promoter DNA to proceed with aceI transcription. This Acinetobacter baumannii (strain ATCC 17978 / DSM 105126 / CIP 53.77 / LMG 1025 / NCDC KC755 / 5377) protein is HTH-type transcriptional regulator AceR.